The sequence spans 258 residues: Tritrans,polycis-undecaprenyl-diphosphate synthase (geranylgeranyl-diphosphate specific) (258 aa).

D37 is an active-site residue. D37 provides a ligand contact to Mg(2+). Substrate is bound by residues 38-41 (GNRR), H54, and 82-84 (STE). The active-site Proton acceptor is N85. Substrate-binding positions include F86, R88, R207, and 213 to 215 (RIS). E226 contacts Mg(2+).

This sequence belongs to the UPP synthase family. Homodimer. The cofactor is Mg(2+).

It catalyses the reaction geranylgeranyl diphosphate + 7 isopentenyl diphosphate = tri-trans,hepta-cis-undecaprenyl diphosphate + 7 diphosphate. Its function is as follows. Catalyzes the sequential condensation of isopentenyl diphosphate (IPP) with geranylgeranyl diphosphate (GGPP) to yield (2Z,6Z,10Z,14Z,18Z,22Z,26Z,30E,34E,38E)-undecaprenyl diphosphate (tritrans,heptacis-UPP). It is probably the precursor of glycosyl carrier lipids. This Thermoplasma volcanium (strain ATCC 51530 / DSM 4299 / JCM 9571 / NBRC 15438 / GSS1) protein is Tritrans,polycis-undecaprenyl-diphosphate synthase (geranylgeranyl-diphosphate specific).